Here is a 78-residue protein sequence, read N- to C-terminus: MSKICQVTGKVPMVGNNRSHARNATRRRFLPNLQSHRFWVESENRFVKLRLTPKGMRIIDKKGIDVVLTDIRARGEKV.

The protein belongs to the bacterial ribosomal protein bL28 family.

This chain is Large ribosomal subunit protein bL28, found in Colwellia psychrerythraea (strain 34H / ATCC BAA-681) (Vibrio psychroerythus).